The primary structure comprises 310 residues: Beta sliding clamp (310 aa).

It belongs to the beta sliding clamp family. As to quaternary structure, forms a ring-shaped head-to-tail homodimer around DNA which binds and tethers DNA polymerases and other proteins to the DNA. The DNA replisome complex has a single clamp-loading complex (3 tau and 1 each of delta, delta', psi and chi subunits) which binds 3 Pol III cores (1 core on the leading strand and 2 on the lagging strand) each with a beta sliding clamp dimer. Additional proteins in the replisome are other copies of gamma, psi and chi, Ssb, DNA helicase and RNA primase.

The protein localises to the cytoplasm. Its function is as follows. Confers DNA tethering and processivity to DNA polymerases and other proteins. Acts as a clamp, forming a ring around DNA (a reaction catalyzed by the clamp-loading complex) which diffuses in an ATP-independent manner freely and bidirectionally along dsDNA. Initially characterized for its ability to contact the catalytic subunit of DNA polymerase III (Pol III), a complex, multichain enzyme responsible for most of the replicative synthesis in bacteria; Pol III exhibits 3'-5' exonuclease proofreading activity. The beta chain is required for initiation of replication as well as for processivity of DNA replication. In Micrococcus luteus (Micrococcus lysodeikticus), this protein is Beta sliding clamp (dnaN).